The sequence spans 876 residues: Alanine--tRNA ligase (876 aa).

Positions 565, 569, 667, and 671 each coordinate Zn(2+).

The protein belongs to the class-II aminoacyl-tRNA synthetase family. The cofactor is Zn(2+).

It localises to the cytoplasm. The enzyme catalyses tRNA(Ala) + L-alanine + ATP = L-alanyl-tRNA(Ala) + AMP + diphosphate. Functionally, catalyzes the attachment of alanine to tRNA(Ala) in a two-step reaction: alanine is first activated by ATP to form Ala-AMP and then transferred to the acceptor end of tRNA(Ala). Also edits incorrectly charged Ser-tRNA(Ala) and Gly-tRNA(Ala) via its editing domain. This chain is Alanine--tRNA ligase, found in Staphylococcus saprophyticus subsp. saprophyticus (strain ATCC 15305 / DSM 20229 / NCIMB 8711 / NCTC 7292 / S-41).